The following is a 379-amino-acid chain: UDP-4-amino-4-deoxy-L-arabinose--oxoglutarate aminotransferase (379 aa).

Position 182 is an N6-(pyridoxal phosphate)lysine (Lys-182).

The protein belongs to the DegT/DnrJ/EryC1 family. ArnB subfamily. In terms of assembly, homodimer. The cofactor is pyridoxal 5'-phosphate.

The enzyme catalyses UDP-4-amino-4-deoxy-beta-L-arabinose + 2-oxoglutarate = UDP-beta-L-threo-pentopyranos-4-ulose + L-glutamate. It participates in nucleotide-sugar biosynthesis; UDP-4-deoxy-4-formamido-beta-L-arabinose biosynthesis; UDP-4-deoxy-4-formamido-beta-L-arabinose from UDP-alpha-D-glucuronate: step 2/3. It functions in the pathway bacterial outer membrane biogenesis; lipopolysaccharide biosynthesis. Functionally, catalyzes the conversion of UDP-4-keto-arabinose (UDP-Ara4O) to UDP-4-amino-4-deoxy-L-arabinose (UDP-L-Ara4N). The modified arabinose is attached to lipid A and is required for resistance to polymyxin and cationic antimicrobial peptides. The sequence is that of UDP-4-amino-4-deoxy-L-arabinose--oxoglutarate aminotransferase from Salmonella choleraesuis (strain SC-B67).